We begin with the raw amino-acid sequence, 566 residues long: Transcription factor P14E8.02 (566 aa).

The segment at 1–32 (MNISSQNVLLPSPIPSSSPMASHKKSWLSKHP) is disordered. Phosphoserine is present on Ser73. Residues 86-137 (NKIGRSSQQCDHVLSTVDKAISRVHAIVTCTQDRMIIECVGWNGMIVSDKMR) enclose the FHA domain. Disordered stretches follow at residues 191-217 (EENR…SQDY), 269-291 (DCSK…LLNG), 312-334 (ESDD…IEES), and 364-437 (FTNH…TKEN). Over residues 314-330 (DDLDKNEEISEGEEYTP) the composition is skewed to acidic residues. Polar residues-rich tracts occupy residues 373–383 (NSNITTSNDSP) and 414–428 (DENT…PSSH). Phosphoserine is present on residues Ser379 and Ser382.

It belongs to the PLM2/TOS4 family.

It localises to the nucleus. Its function is as follows. Probable transcriptional regulatory protein Required for G1/S progression. The polypeptide is Transcription factor P14E8.02 (Schizosaccharomyces pombe (strain 972 / ATCC 24843) (Fission yeast)).